The following is a 421-amino-acid chain: ATP-dependent RNA helicase RhlB (421 aa).

A Q motif motif is present at residues 9–37 (QKFSDFALHPQVVEALEKKGFYNCTPIQA). A Helicase ATP-binding domain is found at 40–219 (LPLTLAGRDV…FEQMNNAEYV (180 aa)). 53–60 (AQTGTGKT) lines the ATP pocket. The DEAD box motif lies at 165–168 (DEAD). The Helicase C-terminal domain occupies 245-390 (RLLQTLIEEE…VSKYNPEALM (146 aa)). Positions 396 to 421 (PLRLTRSRPGNGPRRAGAPRNRRRSG) are disordered. Low complexity predominate over residues 402–414 (SRPGNGPRRAGAP).

The protein belongs to the DEAD box helicase family. RhlB subfamily. In terms of assembly, component of the RNA degradosome, which is a multiprotein complex involved in RNA processing and mRNA degradation.

It localises to the cytoplasm. The enzyme catalyses ATP + H2O = ADP + phosphate + H(+). DEAD-box RNA helicase involved in RNA degradation. Has RNA-dependent ATPase activity and unwinds double-stranded RNA. The protein is ATP-dependent RNA helicase RhlB of Salmonella arizonae (strain ATCC BAA-731 / CDC346-86 / RSK2980).